Consider the following 358-residue polypeptide: Neuronal-specific septin-3 (358 aa).

Over residues 1 to 10 the composition is skewed to basic and acidic residues; the sequence is MSKGLPEART. The interval 1 to 29 is disordered; that stretch reads MSKGLPEARTDTAMSELVPEPRPKPAVPM. Positions 58 to 331 constitute a Septin-type G domain; sequence TGFDFNIMVV…ETYRAKRLND (274 aa). The segment at 68–75 is G1 motif; that stretch reads GQSGLGKS. Position 68 to 75 (68 to 75) interacts with GTP; that stretch reads GQSGLGKS. The residue at position 91 (S91) is a Phosphoserine. A GTP-binding site is contributed by T102. The tract at residues 125 to 128 is G3 motif; that stretch reads DTPG. Residues 207-210 form a G4 motif region; that stretch reads AKAD. Residues 208–216, G265, and R280 contribute to the GTP site; that span reads KADTMTLEE.

The protein belongs to the TRAFAC class TrmE-Era-EngA-EngB-Septin-like GTPase superfamily. Septin GTPase family. As to quaternary structure, septins polymerize into heterooligomeric protein complexes that form filaments, and can associate with cellular membranes, actin filaments and microtubules. GTPase activity is required for filament formation. In terms of processing, phosphorylated by PKG on serine residues. Phosphorylated by PKG on Ser-91. In terms of tissue distribution, brain-specific, with highest expression in the hippocampal CA3 region (at protein level).

Its subcellular location is the cytoplasm. It localises to the cytoskeleton. It is found in the synapse. Its function is as follows. Filament-forming cytoskeletal GTPase. May play a role in cytokinesis (Potential). The sequence is that of Neuronal-specific septin-3 from Rattus norvegicus (Rat).